A 213-amino-acid chain; its full sequence is Bacteriochlorophyll synthase 23 kDa chain (213 aa).

Its pathway is porphyrin-containing compound metabolism; bacteriochlorophyll biosynthesis (light-independent). This Rhodobacter capsulatus (strain ATCC BAA-309 / NBRC 16581 / SB1003) protein is Bacteriochlorophyll synthase 23 kDa chain (bchJ).